Reading from the N-terminus, the 207-residue chain is LPS-assembly lipoprotein LptE (207 aa).

Positions 1-19 (MRHRILMLLLGLAVLVTAG) are cleaved as a signal peptide. C20 carries N-palmitoyl cysteine lipidation. C20 is lipidated: S-diacylglycerol cysteine.

It belongs to the LptE lipoprotein family. Component of the lipopolysaccharide transport and assembly complex. Interacts with LptD.

It localises to the cell outer membrane. In terms of biological role, together with LptD, is involved in the assembly of lipopolysaccharide (LPS) at the surface of the outer membrane. Required for the proper assembly of LptD. Binds LPS and may serve as the LPS recognition site at the outer membrane. The polypeptide is LPS-assembly lipoprotein LptE (Yersinia enterocolitica serotype O:8 / biotype 1B (strain NCTC 13174 / 8081)).